A 247-amino-acid polypeptide reads, in one-letter code: DNA-directed RNA polymerase subunit Rpo3 (247 aa).

It belongs to the archaeal Rpo3/eukaryotic RPB3 RNA polymerase subunit family. As to quaternary structure, part of the RNA polymerase complex.

The protein localises to the cytoplasm. It catalyses the reaction RNA(n) + a ribonucleoside 5'-triphosphate = RNA(n+1) + diphosphate. DNA-dependent RNA polymerase (RNAP) catalyzes the transcription of DNA into RNA using the four ribonucleoside triphosphates as substrates. This Natronomonas pharaonis (strain ATCC 35678 / DSM 2160 / CIP 103997 / JCM 8858 / NBRC 14720 / NCIMB 2260 / Gabara) (Halobacterium pharaonis) protein is DNA-directed RNA polymerase subunit Rpo3.